The chain runs to 96 residues: MSGPNGDPNISVDDGIIEDEDEFSEEEYAAIDSMLDQINSCLDDIEDRNDALNGKLHELLESNRQARKDFRQQLNDEEASPPPAEDPASRDTQTED.

Residues 39 to 79 are a coiled coil; sequence NSCLDDIEDRNDALNGKLHELLESNRQARKDFRQQLNDEEA. A disordered region spans residues 63–96; that stretch reads NRQARKDFRQQLNDEEASPPPAEDPASRDTQTED. A compositionally biased stretch (basic and acidic residues) spans 87–96; sequence PASRDTQTED.

It belongs to the UPF0184 (EST00098) family.

Its subcellular location is the cell junction. It localises to the cytoplasm. The protein localises to the cytoskeleton. Essential for intermediate filament organization in intestinal cells, interacts with intermediate filament and regulates intestinal lumen morphology. The polypeptide is Bublin coiled-coil protein (bbln) (Ctenopharyngodon idella (Grass carp)).